Reading from the N-terminus, the 123-residue chain is Protein LLP homolog (123 aa).

Positions 1–21 (MAKSIRSKWKRKMRAEKRKKN) are enriched in basic residues. 2 disordered regions span residues 1-23 (MAKSIRSKWKRKMRAEKRKKNAP) and 55-123 (KINE…KLAW). Basic and acidic residues predominate over residues 70-89 (DSSKMDMELKRNKKNLRDQH). A compositionally biased stretch (basic residues) spans 100-123 (QQKKLKSQCGKKKGKSKQAKKLAW).

This sequence belongs to the learning-associated protein family.

It is found in the nucleus. It localises to the nucleolus. The protein resides in the chromosome. Regulates dendritic and spine growth and synaptic transmission. The chain is Protein LLP homolog (llph) from Xenopus tropicalis (Western clawed frog).